We begin with the raw amino-acid sequence, 315 residues long: MLLKRLGLAALFSLSMVGCTTAPNTLAVNTTQKIIQYERSKSDLEVKSLTLASGDKMVYAENDNVTGEPLLLIHGFGGNKDNFTRIADKLEGYHLIIPDLLGFGNSSKPMTADYRADAQATRLHELMQAKGLASNTHVGGNSMGGAISVAYAAKYPKEIKSLWLVDTAGFWSAGVPKSLEGATLENNPLLINSKEDFYKMYDFVMYKPPYIPKSVKAVFAQERINNKALDTKILEQIVTDNVEERAKIIAKYNIPTLVVWGDKDQVIKPETTELIKEIIPQAQVIMMNDVGHVPMVEAVKDTANDYKAFRDGLKK.

Residues 1–18 (MLLKRLGLAALFSLSMVG) form the signal peptide. A lipid anchor (N-palmitoyl cysteine) is attached at Cys-19. Residue Cys-19 is the site of S-diacylglycerol cysteine attachment. The region spanning 69 to 296 (PLLLIHGFGG…MNDVGHVPMV (228 aa)) is the AB hydrolase-1 domain. The active site involves His-74. The active-site Charge relay system is Ser-142.

The protein belongs to the lipase/esterase LIP3/BchO family.

The protein resides in the cell membrane. The catalysed reaction is a triacylglycerol + H2O = a diacylglycerol + a fatty acid + H(+). In Moraxella sp. (strain TA144), this protein is Lipase 3 (lip3).